The sequence spans 430 residues: Adenylosuccinate synthetase (430 aa).

GTP-binding positions include 12 to 18 and 40 to 42; these read GDEGKGK and GHT. Aspartate 13 serves as the catalytic Proton acceptor. Mg(2+)-binding residues include aspartate 13 and glycine 40. Residues 13–16, 38–41, threonine 128, arginine 142, glutamine 223, threonine 238, and arginine 302 each bind IMP; these read DEGK and NAGH. The active-site Proton donor is the histidine 41. 298 to 304 is a substrate binding site; sequence TTTGRPR. GTP is bound by residues arginine 304, 330–332, and 412–414; these read SID and SVG.

The protein belongs to the adenylosuccinate synthetase family. As to quaternary structure, homodimer. Mg(2+) serves as cofactor.

The protein resides in the cytoplasm. The enzyme catalyses IMP + L-aspartate + GTP = N(6)-(1,2-dicarboxyethyl)-AMP + GDP + phosphate + 2 H(+). The protein operates within purine metabolism; AMP biosynthesis via de novo pathway; AMP from IMP: step 1/2. Its function is as follows. Plays an important role in the de novo pathway of purine nucleotide biosynthesis. Catalyzes the first committed step in the biosynthesis of AMP from IMP. The polypeptide is Adenylosuccinate synthetase (Bacillus licheniformis (strain ATCC 14580 / DSM 13 / JCM 2505 / CCUG 7422 / NBRC 12200 / NCIMB 9375 / NCTC 10341 / NRRL NRS-1264 / Gibson 46)).